The sequence spans 120 residues: Lysozyme (120 aa).

The C-type lysozyme domain occupies 1 to 120; the sequence is KRFTRCGLVN…NHSNPDISSC (120 aa). 4 disulfide bridges follow: C6–C120, C27–C110, C62–C76, and C72–C90. Active-site residues include E32 and D50.

Belongs to the glycosyl hydrolase 22 family. As to quaternary structure, monomer.

It carries out the reaction Hydrolysis of (1-&gt;4)-beta-linkages between N-acetylmuramic acid and N-acetyl-D-glucosamine residues in a peptidoglycan and between N-acetyl-D-glucosamine residues in chitodextrins.. Its function is as follows. Lysozymes have primarily a bacteriolytic function; those in tissues and body fluids are associated with the monocyte-macrophage system and enhance the activity of immunoagents. The protein is Lysozyme of Antheraea mylitta (Tasar silkworm).